The chain runs to 577 residues: Proline--tRNA ligase (577 aa).

The protein belongs to the class-II aminoacyl-tRNA synthetase family. ProS type 1 subfamily. Homodimer.

It is found in the cytoplasm. The enzyme catalyses tRNA(Pro) + L-proline + ATP = L-prolyl-tRNA(Pro) + AMP + diphosphate. In terms of biological role, catalyzes the attachment of proline to tRNA(Pro) in a two-step reaction: proline is first activated by ATP to form Pro-AMP and then transferred to the acceptor end of tRNA(Pro). As ProRS can inadvertently accommodate and process non-cognate amino acids such as alanine and cysteine, to avoid such errors it has two additional distinct editing activities against alanine. One activity is designated as 'pretransfer' editing and involves the tRNA(Pro)-independent hydrolysis of activated Ala-AMP. The other activity is designated 'posttransfer' editing and involves deacylation of mischarged Ala-tRNA(Pro). The misacylated Cys-tRNA(Pro) is not edited by ProRS. The protein is Proline--tRNA ligase of Thermotoga sp. (strain RQ2).